The chain runs to 204 residues: Outer-membrane lipoprotein carrier protein (204 aa).

The signal sequence occupies residues 1 to 21 (MKKIAVTCALLSAFAVSSVWA). The disordered stretch occupies residues 169–204 (QRSSYQLKSQQNGAVDMSKFTFTPPQGVTVDDQRNK). Polar residues predominate over residues 171–181 (SSYQLKSQQNG).

This sequence belongs to the LolA family. As to quaternary structure, monomer.

It is found in the periplasm. Its function is as follows. Participates in the translocation of lipoproteins from the inner membrane to the outer membrane. Only forms a complex with a lipoprotein if the residue after the N-terminal Cys is not an aspartate (The Asp acts as a targeting signal to indicate that the lipoprotein should stay in the inner membrane). This is Outer-membrane lipoprotein carrier protein from Cronobacter sakazakii (strain ATCC BAA-894) (Enterobacter sakazakii).